The chain runs to 152 residues: Arginine repressor (152 aa).

Belongs to the ArgR family.

It is found in the cytoplasm. The protein operates within amino-acid biosynthesis; L-arginine biosynthesis [regulation]. Regulates arginine biosynthesis genes. This Lachnoclostridium phytofermentans (strain ATCC 700394 / DSM 18823 / ISDg) (Clostridium phytofermentans) protein is Arginine repressor.